We begin with the raw amino-acid sequence, 834 residues long: MNLTRREFAKANAAAIAAAAAGLPILVRASNLVTEADVTSLVWNKAPCRFCGTGCSVMVATRDGQVVATHGDIKAEVNRGINCVKGYFLSKIMYGSDRLTRPLLRMKDGKFDKQGEFQPISWEQAFDIMAEKFKAALKAKGPESVGMFGSGQWTVWEGYAANKLFKAGLRSNNIDPNARHCMASAVMGFMRSFGMDEPMGCYDDIEATDSFVLWGSNMAEMHPVLWSRVTDRRLSAPQVKVAVLSTFEHRSFELADLPMVFKPQTDLIILNYIANHIIESGAVNRDFVERHVRFAHGAEDIGYGLRPDDPLEKKAKNADKANTWSDIDFKAFAEFVKPYTLERTARESGVPAERLKALAELYADPKRKVVSFWTMGFNQHTRGVWANNLIYNIHLLTGKISEPGNSPFSLTGQPSACGTAREVGTFSHRLPADLVVTNPKHRETAEKIWKVPAGTIQEKVGFHAVQQSRMLKDGVLNVYWTQVSNNMQAGPNVMQEVLPGWRNPDNFVIVSDVYPTVSAQAADLILPSAMWVEKEGAFGNAERRTQFWHQLVKAPGEAKSDLWQLVEFSKRFTTDEVWPAELLAKAPELKGKTLYDVLFRNGQVDRFPASDLAKGYANDEVDAFGFYIQKGLFEEYAAFGRGHGHDLAPFDAYHEARGLRWPVVDGKETRWRYREGYDPYVSKGSGVQFYGYPDKKAIAFALPYEPPAEAPDQDYPFWLATGRVLEHWHTGSMTARVPELYKAVPDALVYMHPEDARQLKLRRGSEVKVVSRRGEIRARVETRGRNKPPQGLVFVPFFDANKLINKVTLDATDPISKQTDYKKCAVRIELLNLA.

The segment at residues 1–29 (MNLTRREFAKANAAAIAAAAAGLPILVRA) is a signal peptide (tat-type signal). One can recognise a 4Fe-4S Mo/W bis-MGD-type domain in the interval 41-97 (LVWNKAPCRFCGTGCSVMVATRDGQVVATHGDIKAEVNRGINCVKGYFLSKIMYGSD). [4Fe-4S] cluster-binding residues include cysteine 48, cysteine 51, cysteine 55, and cysteine 83. Mo-bis(molybdopterin guanine dinucleotide) is bound by residues lysine 85, glutamine 152, asparagine 177, cysteine 181, 214–221 (WGSNMAEM), 245–249 (STFEH), 264–266 (QTD), methionine 375, glutamine 379, asparagine 485, 511–512 (SD), lysine 534, aspartate 561, and 721–730 (TGRVLEHWHT). Phenylalanine 797 provides a ligand contact to substrate. Mo-bis(molybdopterin guanine dinucleotide)-binding residues include asparagine 805 and lysine 822.

It belongs to the prokaryotic molybdopterin-containing oxidoreductase family. NasA/NapA/NarB subfamily. Component of the periplasmic nitrate reductase NapAB complex composed of NapA and NapB. [4Fe-4S] cluster is required as a cofactor. Requires Mo-bis(molybdopterin guanine dinucleotide) as cofactor. Predicted to be exported by the Tat system. The position of the signal peptide cleavage has not been experimentally proven.

The protein resides in the periplasm. It catalyses the reaction 2 Fe(II)-[cytochrome] + nitrate + 2 H(+) = 2 Fe(III)-[cytochrome] + nitrite + H2O. Functionally, catalytic subunit of the periplasmic nitrate reductase complex NapAB. Receives electrons from NapB and catalyzes the reduction of nitrate to nitrite. In Pseudomonas aeruginosa (strain LESB58), this protein is Periplasmic nitrate reductase.